The sequence spans 108 residues: Precursor of CEP16 (108 aa).

The signal sequence occupies residues 1–27 (MVMAKNLTKFYVVFLVVLMMVVSLLLA). Residues 28 to 92 (IEGRPVKDSS…VGHHRAKGYK (65 aa)) constitute a propeptide that is removed on maturation. 2 N-linked (GlcNAc...) asparagine glycosylation sites follow: asparagine 50 and asparagine 98. The segment at 76-108 (QSGPSPGVGHHRAKGYKMFGRANDSGPSPGVGH) is disordered. Residues proline 102 and proline 104 each carry the hydroxyproline modification.

The protein belongs to the C-terminally encoded plant signaling peptide (CEP) family. Interacts with CEP receptors (e.g. CEPR1 and CEPR2). The mature small signaling peptide is generated by proteolytic processing of the longer precursor.

It localises to the secreted. It is found in the extracellular space. Its subcellular location is the apoplast. Its function is as follows. Extracellular signaling peptide that may regulate primary root growth rate and systemic nitrogen (N)-demand signaling. The protein is Precursor of CEP16 of Arabidopsis thaliana (Mouse-ear cress).